Consider the following 211-residue polypeptide: Small ribosomal subunit protein uS5 (211 aa).

An S5 DRBM domain is found at 51-114 (LKHEVLDVSL…ANAKLNITPV (64 aa)).

This sequence belongs to the universal ribosomal protein uS5 family. As to quaternary structure, part of the 30S ribosomal subunit. Contacts protein S4.

In terms of biological role, with S4 and S12 plays an important role in translational accuracy. In Ignicoccus hospitalis (strain KIN4/I / DSM 18386 / JCM 14125), this protein is Small ribosomal subunit protein uS5.